Reading from the N-terminus, the 876-residue chain is GATOR2 complex protein MIOS (876 aa).

6 WD repeats span residues 59–101, 112–156, 182–222, 224–262, 266–307, and 400–440; these read SDTP…NSKS, KHAR…SPEA, GQND…QKTF, NTKA…KPVF, EQPK…MPFG, and RAQS…KQYT. The C4-type zinc finger occupies 738–784; the sequence is VSCNFCGKSISYSCSAMPHQGRGFSQYGVSGSPTKSKVTSCPGCRKP. Zn(2+) contacts are provided by Cys-740, Cys-743, Cys-778, Cys-781, Cys-791, Cys-830, Cys-833, His-835, His-838, His-841, Cys-852, Cys-857, and Cys-861. The segment at 785–866 adopts an RING-type; atypical zinc-finger fold; the sequence is LPRCALCLMN…CTCKCMQLDT (82 aa).

This sequence belongs to the WD repeat mio family. Component of the GATOR2 subcomplex, composed of MIOS, SEC13, SEH1L, WDR24 and WDR59. The GATOR2 complex interacts with CASTOR1 and CASTOR2; the interaction is negatively regulated by arginine. The GATOR2 complex interacts with SESN1, SESN2 and SESN3; the interaction is negatively regulated by amino acids. Interacts with SAR1; the interaction is direct, disrupted by leucine and mediates the interaction of SAR1 with the GATOR2 complex to negatively regulate the TORC1 signaling upon leucine deprivation.

It is found in the lysosome membrane. Its activity is regulated as follows. The GATOR2 complex is negatively regulated by the upstream amino acid sensors CASTOR1 and SESN2, which sequester the GATOR2 complex in absence of amino acids. In the presence of abundant amino acids, GATOR2 is released from CASTOR1 and SESN2 and activated. Functionally, as a component of the GATOR2 complex, functions as an activator of the amino acid-sensing branch of the mTORC1 signaling pathway. The GATOR2 complex indirectly activates mTORC1 through the inhibition of the GATOR1 subcomplex. GATOR2 probably acts as an E3 ubiquitin-protein ligase toward GATOR1. In the presence of abundant amino acids, the GATOR2 complex mediates ubiquitination of the NPRL2 core component of the GATOR1 complex, leading to GATOR1 inactivation. In the absence of amino acids, GATOR2 is inhibited, activating the GATOR1 complex. Within the GATOR2 complex, MIOS is required to prevent autoubiquitination of WDR24, the catalytic subunit of the complex. The protein is GATOR2 complex protein MIOS of Danio rerio (Zebrafish).